Here is a 232-residue protein sequence, read N- to C-terminus: Ferric nitrobindin-like protein (232 aa).

The segment covering 1–10 (MSENETSKTG) has biased composition (polar residues). The tract at residues 1–33 (MSENETSKTGGNAGVPGSGADAPSLSDSPAISG) is disordered. Residues 85-91 (GVWRGEG) carry the GXWXGXG motif.

Belongs to the nitrobindin family.

In Corynebacterium efficiens (strain DSM 44549 / YS-314 / AJ 12310 / JCM 11189 / NBRC 100395), this protein is Ferric nitrobindin-like protein.